A 338-amino-acid chain; its full sequence is Ornithine carbamoyltransferase (338 aa).

Ser2 is subject to N-acetylserine. Carbamoyl phosphate is bound by residues 67 to 70, Arg118, His145, and Gln148; that span reads STRT. Asn185, Asp249, Ser253, and Met254 together coordinate L-ornithine. Cys289 acts as the Proton acceptor in catalysis. Residues 289 to 290 and Arg316 each bind carbamoyl phosphate; that span reads CL.

The protein belongs to the aspartate/ornithine carbamoyltransferase superfamily. OTCase family. In terms of assembly, interacts with CAR1.

The protein localises to the cytoplasm. The catalysed reaction is carbamoyl phosphate + L-ornithine = L-citrulline + phosphate + H(+). It participates in amino-acid biosynthesis; L-arginine biosynthesis; L-arginine from L-ornithine and carbamoyl phosphate: step 1/3. Forms a stable complex with CAR1 in the presence of ornithine and arginine. In this complex CAR1 retains activity, but ARG3 activity is inhibited. The sequence is that of Ornithine carbamoyltransferase (ARG3) from Saccharomyces cerevisiae (strain ATCC 204508 / S288c) (Baker's yeast).